The following is an 82-amino-acid chain: Small ribosomal subunit protein bS18 (82 aa).

A disordered region spans residues 1–24 (MKRTNMKKARMEQSRRPKKNPLKA).

The protein belongs to the bacterial ribosomal protein bS18 family. Part of the 30S ribosomal subunit. Forms a tight heterodimer with protein bS6.

Its function is as follows. Binds as a heterodimer with protein bS6 to the central domain of the 16S rRNA, where it helps stabilize the platform of the 30S subunit. This Corynebacterium jeikeium (strain K411) protein is Small ribosomal subunit protein bS18.